The following is a 24-amino-acid chain: Brevinin-1BYc (24 aa).

The cysteines at positions 18 and 24 are disulfide-linked.

Expressed by the skin glands.

It is found in the secreted. Antibacterial activity against Gram-positive bacterium S.aureus. Weak antifungal activity against C.albicans. The sequence is that of Brevinin-1BYc from Rana boylii (Foothill yellow-legged frog).